A 393-amino-acid polypeptide reads, in one-letter code: Homoserine O-succinyltransferase (393 aa).

The 311-residue stretch at 62-372 (NAVLVCHALN…PHGHDAFLLD (311 aa)) folds into the AB hydrolase-1 domain. Catalysis depends on Ser-168, which acts as the Nucleophile. Residue Arg-238 participates in substrate binding. Residues Asp-333 and His-366 contribute to the active site. Asp-367 is a binding site for substrate.

The protein belongs to the AB hydrolase superfamily. MetX family. Homodimer.

The protein resides in the cytoplasm. It catalyses the reaction L-homoserine + succinyl-CoA = O-succinyl-L-homoserine + CoA. It participates in amino-acid biosynthesis; L-methionine biosynthesis via de novo pathway; O-succinyl-L-homoserine from L-homoserine: step 1/1. Its function is as follows. Transfers a succinyl group from succinyl-CoA to L-homoserine, forming succinyl-L-homoserine. This Cupriavidus necator (strain ATCC 17699 / DSM 428 / KCTC 22496 / NCIMB 10442 / H16 / Stanier 337) (Ralstonia eutropha) protein is Homoserine O-succinyltransferase.